The following is a 175-amino-acid chain: Transcription factor E (175 aa).

The HTH TFE/IIEalpha-type domain maps to 3 to 88; sequence ENPLIQQVLF…TWKPSLEKVP (86 aa).

The protein belongs to the TFE family. Monomer. Interaction with RNA polymerase subunits RpoF and RpoE is necessary for Tfe stimulatory transcription activity. Able to interact with Tbp and RNA polymerase in the absence of DNA promoter. Interacts both with the preinitiation and elongation complexes.

Its function is as follows. Transcription factor that plays a role in the activation of archaeal genes transcribed by RNA polymerase. Facilitates transcription initiation by enhancing TATA-box recognition by TATA-box-binding protein (Tbp), and transcription factor B (Tfb) and RNA polymerase recruitment. Not absolutely required for transcription in vitro, but particularly important in cases where Tbp or Tfb function is not optimal. It dynamically alters the nucleic acid-binding properties of RNA polymerases by stabilizing the initiation complex and destabilizing elongation complexes. Seems to translocate with the RNA polymerase following initiation and acts by binding to the non template strand of the transcription bubble in elongation complexes. In Methanococcus maripaludis (strain C7 / ATCC BAA-1331), this protein is Transcription factor E.